An 894-amino-acid chain; its full sequence is Microsomal triglyceride transfer protein large subunit (894 aa).

An N-terminal signal peptide occupies residues methionine 1–glycine 21. One can recognise a Vitellogenin domain in the interval leucine 28–leucine 658. Cysteine 174 and cysteine 194 form a disulfide bridge.

Interacts with PRAP1. In terms of assembly, heterodimer; heterodimerizes with the protein disulfide isomerase (P4HB/PDI). Interacts with APOB. As to quaternary structure, heterodimer; heterodimerizes with the protein disulfide isomerase (P4HB/PDI). In terms of processing, cleaved by signal peptidase between residues Gln-33 and Asn-34. In terms of tissue distribution, mainly expressed in the intestine and the liver, and at lower levels in white and brown fat cells. Expressed in heart. As to expression, ubiquitous, and is the major isoform in hematopoietic cells and adipocytes.

Its subcellular location is the endoplasmic reticulum. It localises to the golgi apparatus. It catalyses the reaction a 1,2-diacyl-sn-glycero-3-phosphocholine(in) = a 1,2-diacyl-sn-glycero-3-phosphocholine(out). It carries out the reaction a 1,2-diacyl-sn-glycero-3-phosphoethanolamine(in) = a 1,2-diacyl-sn-glycero-3-phosphoethanolamine(out). The enzyme catalyses a cholesterol ester(in) = a cholesterol ester(out). The catalysed reaction is a triacyl-sn-glycerol(in) = a triacyl-sn-glycerol(out). Catalyzes the transport of triglyceride, cholesteryl ester, and phospholipid between phospholipid surfaces. Required for the assembly and secretion of plasma lipoproteins that contain apolipoprotein B. May be involved in regulating cholesteryl ester biosynthesis in cells that produce lipoproteins. Functionally, critical for the development of natural killer T (NKT) cells. Required for the assembly and secretion of plasma lipoproteins that contain apolipoprotein B. This chain is Microsomal triglyceride transfer protein large subunit (Mttp), found in Mus musculus (Mouse).